We begin with the raw amino-acid sequence, 308 residues long: Reticulon-like protein 1 (308 aa).

Composition is skewed to polar residues over residues 1 to 17 (MSEQ…SVTA) and 41 to 66 (PSTE…IQNI). 2 disordered regions span residues 1-22 (MSEQ…DVAA) and 41-92 (PSTE…CPVS). N-linked (GlcNAc...) asparagine glycosylation is present at asparagine 65. Residues 67–81 (SSSSSEPHHTSQSTP) show a composition bias toward low complexity. N-linked (GlcNAc...) asparagine glycans are attached at residues asparagine 113 and asparagine 135. The region spanning 127 to 308 (LWSVLTWKNT…TETINTTVNK (182 aa)) is the Reticulon domain. The next 4 helical transmembrane spans lie at 138–158 (CSFS…WINL), 166–186 (FRYV…ASNG), 233–253 (PILT…SGFL), and 255–275 (YKSL…LYVC). A glycan (N-linked (GlcNAc...) asparagine) is linked at asparagine 303.

In terms of assembly, interacts with TTS1 and YOP1.

The protein resides in the endoplasmic reticulum membrane. It is found in the nucleus membrane. Required for the correct positioning of the cellular division plane by delimiting the actomyosin ring assembly at the cell equator. Overexpression causes cell lysis. The chain is Reticulon-like protein 1 (rtn1) from Schizosaccharomyces pombe (strain 972 / ATCC 24843) (Fission yeast).